The primary structure comprises 345 residues: Uroporphyrinogen decarboxylase (345 aa).

Substrate is bound by residues 23-27, Asp73, Tyr149, Thr203, and His319; that span reads RQAGR.

It belongs to the uroporphyrinogen decarboxylase family. In terms of assembly, homodimer.

The protein resides in the cytoplasm. The enzyme catalyses uroporphyrinogen III + 4 H(+) = coproporphyrinogen III + 4 CO2. It participates in porphyrin-containing compound metabolism; protoporphyrin-IX biosynthesis; coproporphyrinogen-III from 5-aminolevulinate: step 4/4. Its function is as follows. Catalyzes the decarboxylation of four acetate groups of uroporphyrinogen-III to yield coproporphyrinogen-III. This Vesicomyosocius okutanii subsp. Calyptogena okutanii (strain HA) protein is Uroporphyrinogen decarboxylase.